Here is a 328-residue protein sequence, read N- to C-terminus: uncharacterized protein (328 aa).

Coiled coils occupy residues 67–190 and 223–251; these read FKEQ…VLEE and MAQR…DNMM.

This is an uncharacterized protein from Mus musculus (Mouse).